The chain runs to 236 residues: 2-C-methyl-D-erythritol 4-phosphate cytidylyltransferase (236 aa).

This sequence belongs to the IspD/TarI cytidylyltransferase family. IspD subfamily. As to quaternary structure, homodimer.

It carries out the reaction 2-C-methyl-D-erythritol 4-phosphate + CTP + H(+) = 4-CDP-2-C-methyl-D-erythritol + diphosphate. It functions in the pathway isoprenoid biosynthesis; isopentenyl diphosphate biosynthesis via DXP pathway; isopentenyl diphosphate from 1-deoxy-D-xylulose 5-phosphate: step 2/6. Functionally, catalyzes the formation of 4-diphosphocytidyl-2-C-methyl-D-erythritol from CTP and 2-C-methyl-D-erythritol 4-phosphate (MEP). This is 2-C-methyl-D-erythritol 4-phosphate cytidylyltransferase from Escherichia coli O157:H7.